The primary structure comprises 272 residues: Short-chain dehydrogenase srdC (272 aa).

Positions 15, 65, 127, 173, 177, 206, and 208 each coordinate NADP(+). Tyrosine 173 functions as the Proton donor in the catalytic mechanism. Lysine 177 serves as the catalytic Lowers pKa of active site Tyr.

Belongs to the short-chain dehydrogenases/reductases (SDR) family.

Short-chain dehydrogenase; part of the gene cluster that mediates the biosynthesis of sordarial, a salicylic aldehyde structurally related to the phytotoxin pyriculol. The most interesting aspect of this pathway is formation of an aromatic product from the highly reducing polyketide synthase srdA. SrdA synthesizes a reduced polyketide chain from one molecule of acetyl-CoA and five molecules of malonyl-CoA. The polyketide chain is then reductively released as an aldehyde. The oxidoreductases srdC, srdD and srdE then oxidize one of the hydroxy groups to facilitate the intramolecular aldol condensation, followed by dehydration to yield a salicylic aldehyde. This aldehyde can undergo facile reduction by endogenous reductases to yield the alcohol 1-hydroxy-2-hydroxymethyl-3-pent-1,3-dienylbenzene. The flavin-dependent srdI counteract against the propensity of the aldehydes to be reduced under physiological conditions and is responsible for reoxidizing 1-hydroxy-2-hydroxymethyl-3-pent-1,3-dienylbenzene back to the salicylic aldehyde. This salicylic aldehyde is then selectively epoxidized by the cupin-domain-containing oxidoreductase srdB to yield the epoxide, which can be hydrolyzed stereoselectively by the hydrolase srdG to give the final product sordarial. The sequence is that of Short-chain dehydrogenase srdC from Neurospora crassa (strain ATCC 24698 / 74-OR23-1A / CBS 708.71 / DSM 1257 / FGSC 987).